The sequence spans 226 residues: MTNIKHLAIIMDGNARWADQHNLTKSEGHKAGADKIRELLPEFLNLNIPYITLYTFSSENWQRSSTEVDFLIKLLSIYLKTELNNLHKNGVKIKVIGRLTLLSSSLQKQINNAIELTKNNNKITLCIAFSYGSRQEIVDACTKIITSGKKAVSDSDIQHALYDPEMPDVDLLIRPGGVYRISNFLLWQAAYAELYFSPKYWPDFNKYDIQEAINDYSKRKRTFGKR.

D12 is a catalytic residue. Residue D12 participates in Mg(2+) binding. Residues 13–16 (GNAR), W17, K25, H29, and 57–59 (SSE) each bind substrate. N60 serves as the catalytic Proton acceptor. Residues W61, R63, R174, and 180–182 (RIS) contribute to the substrate site. Residue E193 participates in Mg(2+) binding.

Belongs to the UPP synthase family. Homodimer. It depends on Mg(2+) as a cofactor.

Its function is as follows. Catalyzes the condensation of isopentenyl diphosphate (IPP) with allylic pyrophosphates generating different type of terpenoids. In Rickettsia sibirica (strain ATCC VR-151 / 246), this protein is Isoprenyl transferase.